A 96-amino-acid chain; its full sequence is Large ribosomal subunit protein bL28 (96 aa).

This sequence belongs to the bacterial ribosomal protein bL28 family.

This chain is Large ribosomal subunit protein bL28, found in Methylobacterium nodulans (strain LMG 21967 / CNCM I-2342 / ORS 2060).